The sequence spans 129 residues: Small ribosomal subunit protein uS11 (129 aa).

The protein belongs to the universal ribosomal protein uS11 family. As to quaternary structure, part of the 30S ribosomal subunit. Interacts with proteins S7 and S18. Binds to IF-3.

Located on the platform of the 30S subunit, it bridges several disparate RNA helices of the 16S rRNA. Forms part of the Shine-Dalgarno cleft in the 70S ribosome. The protein is Small ribosomal subunit protein uS11 of Halalkalibacterium halodurans (strain ATCC BAA-125 / DSM 18197 / FERM 7344 / JCM 9153 / C-125) (Bacillus halodurans).